Consider the following 642-residue polypeptide: Cysteine-rich receptor-like protein kinase 27 (642 aa).

A signal peptide spans 1 to 24 (MASTSIMLSSFFSFFFLTFFVTYA). Residues 25–274 (QQNVTVHTIC…QGKSKDRSKT (250 aa)) are Extracellular-facing. N-linked (GlcNAc...) asparagine glycosylation is found at Asn-27, Asn-40, Asn-44, Asn-70, Asn-145, Asn-173, and Asn-258. 2 Gnk2-homologous domains span residues 29-130 (TVHT…SRII) and 136-240 (PVPF…VYPF). The chain crosses the membrane as a helical span at residues 275-295 (LIFAVVPIVAIILGLVFLFIY). The Cytoplasmic portion of the chain corresponds to 296–642 (LKRRRKKKTL…DVSLTDLSAR (347 aa)). One can recognise a Protein kinase domain in the interval 333 to 620 (FSLTNKIGEG…QLPKPSQPGF (288 aa)). ATP-binding positions include 339–347 (IGEGGFGVV) and Lys-361. Tyr-406 carries the phosphotyrosine modification. Asp-458 functions as the Proton acceptor in the catalytic mechanism. The residue at position 462 (Ser-462) is a Phosphoserine. Thr-498 carries the post-translational modification Phosphothreonine. Tyr-506 is subject to Phosphotyrosine.

It belongs to the protein kinase superfamily. Ser/Thr protein kinase family. CRK subfamily.

Its subcellular location is the membrane. The catalysed reaction is L-seryl-[protein] + ATP = O-phospho-L-seryl-[protein] + ADP + H(+). It catalyses the reaction L-threonyl-[protein] + ATP = O-phospho-L-threonyl-[protein] + ADP + H(+). The protein is Cysteine-rich receptor-like protein kinase 27 (CRK27) of Arabidopsis thaliana (Mouse-ear cress).